We begin with the raw amino-acid sequence, 315 residues long: Small ribosomal subunit biogenesis GTPase RsgA (315 aa).

Positions 82–246 (DQFKSKVLAA…LIDSPGFQEF (165 aa)) constitute a CP-type G domain. Residues 130–133 (NKID) and 184–192 (GQSGMGKSS) each bind GTP. Zn(2+)-binding residues include Cys270, Cys275, His277, and Cys283.

This sequence belongs to the TRAFAC class YlqF/YawG GTPase family. RsgA subfamily. As to quaternary structure, monomer. Associates with 30S ribosomal subunit, binds 16S rRNA. It depends on Zn(2+) as a cofactor.

The protein resides in the cytoplasm. One of several proteins that assist in the late maturation steps of the functional core of the 30S ribosomal subunit. Helps release RbfA from mature subunits. May play a role in the assembly of ribosomal proteins into the subunit. Circularly permuted GTPase that catalyzes slow GTP hydrolysis, GTPase activity is stimulated by the 30S ribosomal subunit. In Ralstonia pickettii (strain 12J), this protein is Small ribosomal subunit biogenesis GTPase RsgA.